Here is a 239-residue protein sequence, read N- to C-terminus: Fatty acid metabolism regulator protein (239 aa).

The 69-residue stretch at 6–74 folds into the HTH gntR-type domain; that stretch reads QSPAGFAEEY…HGKPTKVNNF (69 aa). The segment at residues 34–53 is a DNA-binding region (H-T-H motif); sequence ERELSELIGVTRTTLREVLQ.

Homodimer.

The protein localises to the cytoplasm. In terms of biological role, multifunctional regulator of fatty acid metabolism. This is Fatty acid metabolism regulator protein from Enterobacter sp. (strain 638).